Consider the following 166-residue polypeptide: Bacterial non-heme ferritin (166 aa).

Residues 2–145 (LSKNLLEALN…THINYLTRIG (144 aa)) enclose the Ferritin-like diiron domain. The Fe cation site is built by Glu-17, Glu-50, His-53, Glu-94, and Gln-127.

Belongs to the ferritin family. Prokaryotic subfamily.

It is found in the cytoplasm. The enzyme catalyses 4 Fe(2+) + O2 + 6 H2O = 4 iron(III) oxide-hydroxide + 12 H(+). Functionally, iron-storage protein. This chain is Bacterial non-heme ferritin (ftnA), found in Staphylococcus aureus (strain USA300).